A 301-amino-acid chain; its full sequence is Porphobilinogen deaminase (301 aa).

Residue cysteine 242 is modified to S-(dipyrrolylmethanemethyl)cysteine.

Belongs to the HMBS family. As to quaternary structure, monomer. Dipyrromethane is required as a cofactor.

It carries out the reaction 4 porphobilinogen + H2O = hydroxymethylbilane + 4 NH4(+). The protein operates within porphyrin-containing compound metabolism; protoporphyrin-IX biosynthesis; coproporphyrinogen-III from 5-aminolevulinate: step 2/4. Functionally, tetrapolymerization of the monopyrrole PBG into the hydroxymethylbilane pre-uroporphyrinogen in several discrete steps. This chain is Porphobilinogen deaminase, found in Rickettsia akari (strain Hartford).